We begin with the raw amino-acid sequence, 203 residues long: Thymidylate kinase (203 aa).

Position 10-17 (10-17) interacts with ATP; that stretch reads GIDGAGKS.

Belongs to the thymidylate kinase family.

It carries out the reaction dTMP + ATP = dTDP + ADP. Its function is as follows. Phosphorylation of dTMP to form dTDP in both de novo and salvage pathways of dTTP synthesis. The sequence is that of Thymidylate kinase from Cupriavidus taiwanensis (strain DSM 17343 / BCRC 17206 / CCUG 44338 / CIP 107171 / LMG 19424 / R1) (Ralstonia taiwanensis (strain LMG 19424)).